Here is a 975-residue protein sequence, read N- to C-terminus: Homeobox protein cut-like 1 (975 aa).

Residues 1–73 constitute a DNA-binding region (CUT 1); that stretch reads SRQVKEQLIK…ILALRSIQGR (73 aa). 2 disordered regions span residues 90–113 and 126–148; these read PKRR…GSDE and LQVQ…TSDD. Residues 113-169 adopt a coiled-coil conformation; sequence EAIKSILEQAKRELQVQKTAEPAQPSSTSSSGTSDDAIRSILQQARREMEAQQAALD. Residue Ser207 is modified to Phosphoserine. A disordered region spans residues 209–246; it reads KKPPTAPDTSASTLPNPPALKKESQDAPGLDLPGAAES. Residues Lys229, Lys255, and Lys286 each participate in a glycyl lysine isopeptide (Lys-Gly) (interchain with G-Cter in SUMO2) cross-link. Residues 262-297 show a composition bias toward basic and acidic residues; sequence GVWKDHWWSTVQPERKSAAPPEDAKSEEAGGTKEKG. Residues 262–369 form a disordered region; it reads GVWKDHWWST…SKPAKPSVPP (108 aa). Over residues 328–351 the composition is skewed to polar residues; that stretch reads RTPQSSELSLTGASRSETPQNSPL. Ser349 bears the Phosphoserine mark. Residues 374–461 constitute a DNA-binding region (CUT 2); it reads QYEIYMYQEV…QGVLPVQGQQ (88 aa). The span at 476–489 shows a compositional bias: polar residues; that stretch reads LQQGCVSSESTPKT. Residues 476–549 are disordered; the sequence is LQQGCVSSES…SQPATPLPLS (74 aa). Positions 490 to 506 are enriched in low complexity; that stretch reads SASCSPAPESPMSSSES. Ser499 and Ser509 each carry phosphoserine. The CUT 3 DNA-binding region spans 557-644; that stretch reads QELVAMSPEL…VEKLMDMKRM (88 aa). A disordered region spans residues 652–687; sequence RRHSSVSDSQPCEPPSVGIDYSQGASPQPQHQLKKP. A DNA-binding region (homeobox) is located at residues 684-743; that stretch reads LKKPRVVLAPEEKEALKRAYQQKPYPSPKTIEELATQLNLKTSTVINWFHNYRSRIRREL. Phosphoserine is present on Ser710. Lys724 participates in a covalent cross-link: Glycyl lysine isopeptide (Lys-Gly) (interchain with G-Cter in SUMO2). A disordered region spans residues 752–949; sequence SQGQAGARHS…DSRDNPLRKK (198 aa). Positions 756–773 are enriched in low complexity; it reads AGARHSPSARSSGAAPSS. The residue at position 777 (Ser777) is a Phosphoserine. Positions 780–813 are enriched in low complexity; it reads GVEAAEGPGAADAEESAPAAAAKSQGGPAEAAVA. Positions 838–847 are enriched in gly residues; the sequence is PGRRGGGGPA. A compositionally biased stretch (low complexity) spans 850–860; that stretch reads APAAPAAAARG. Residues 861 to 890 are compositionally biased toward basic residues; sequence PSRRPGARAKPRRRRRRRRRHARGGGRRYL. The segment covering 907–929 has biased composition (low complexity); that stretch reads RSSALPSTSAPAAARRPSSLQSL. Position 925 is a phosphoserine (Ser925). The segment covering 937–946 has biased composition (basic and acidic residues); sequence GARDSRDNPL. Ser956 and Ser966 each carry phosphoserine.

This sequence belongs to the CUT homeobox family. As to quaternary structure, interacts with BANP. As cells progress into S phase, a fraction of CUX1 molecules is proteolytically processed into N-terminally truncated proteins of 110 kDa by CTSL. Cell cycle-dependent processing of CUX1 serves to generate a CDP/Cux p110 with distinct DNA binding and transcriptional properties. In terms of processing, phosphorylated by PKA. As to expression, a broad pattern of expression observed in tissues of diverse origins, such as cartilage, liver, brain, lung, heart and skeletal muscle. There are 2 distinct protein species: the larger one (230-250 kDa) is found mainly in adult brain, lung and heart, and the smaller one (180-190 kDa) predominates in early embryonic tissues.

The protein localises to the nucleus. Transcription factor involved in the control of neuronal differentiation in the brain. Regulates dendrite development and branching, and dendritic spine formation in cortical layers II-III. Also involved in the control of synaptogenesis. In addition, it has probably a broad role in mammalian development as a repressor of developmentally regulated gene expression. May act by preventing binding of positively-activing CCAAT factors to promoters. Component of nf-munr repressor; binds to the matrix attachment regions (MARs) (5' and 3') of the immunoglobulin heavy chain enhancer. Represses T-cell receptor (TCR) beta enhancer function by binding to MARbeta, an ATC-rich DNA sequence located upstream of the TCR beta enhancer. Binds to the TH enhancer; may require the basic helix-loop-helix protein TCF4 as a coactivator. In terms of biological role, plays a role in cell cycle progression, in particular at the G1/S transition. As cells progress into S phase, a fraction of CUX1 molecules is proteolytically processed into N-terminally truncated proteins of 110 kDa. While CUX1 only transiently binds to DNA and carries the CCAAT-displacement activity, CDP/Cux p110 makes a stable interaction with DNA and stimulates expression of genes such as POLA1. This Canis lupus familiaris (Dog) protein is Homeobox protein cut-like 1 (CUX1).